The sequence spans 564 residues: Isopullulanase (564 aa).

The signal sequence occupies residues 1 to 19; it reads MRSTGYLLTLSAAFQVAQA. N-linked (GlcNAc...) asparagine glycosylation is found at Asn24, Asn94, Asn115, Asn138, Asn186, Asn210, Asn305, Asn381, Asn448, Asn455, Asn460, Asn486, Asn491, Asn503, and Asn535.

N-glycosylated.

The protein resides in the secreted. The enzyme catalyses Hydrolysis of pullulan to isopanose (6-alpha-maltosylglucose).. Hydrolyzes pullulan, a linear polymer which is composed of maltotriose units with alpha-1,6 glucosidic linkages, to produce isopanose (Glca1-4Glca1-6Glc). The polypeptide is Isopullulanase (ipuA) (Aspergillus niger).